Consider the following 61-residue polypeptide: Probable pancreatic secretory proteinase inhibitor (61 aa).

The Kazal-like domain maps to 6–61 (LYRKPSCGEMSAMHACPMNFAPVCGTDGNTYPNECSLCFQRQNTKTDILITKDDRC). Cystine bridges form between C12–C43, C21–C40, and C29–C61.

Its subcellular location is the secreted. The chain is Probable pancreatic secretory proteinase inhibitor from Anguilla anguilla (European freshwater eel).